Here is a 400-residue protein sequence, read N- to C-terminus: NADH-quinone oxidoreductase subunit D (400 aa).

Belongs to the complex I 49 kDa subunit family. In terms of assembly, NDH-1 is composed of 14 different subunits. Subunits NuoB, C, D, E, F, and G constitute the peripheral sector of the complex.

The protein localises to the cell inner membrane. The catalysed reaction is a quinone + NADH + 5 H(+)(in) = a quinol + NAD(+) + 4 H(+)(out). Its function is as follows. NDH-1 shuttles electrons from NADH, via FMN and iron-sulfur (Fe-S) centers, to quinones in the respiratory chain. The immediate electron acceptor for the enzyme in this species is believed to be menaquinone. Couples the redox reaction to proton translocation (for every two electrons transferred, four hydrogen ions are translocated across the cytoplasmic membrane), and thus conserves the redox energy in a proton gradient. The protein is NADH-quinone oxidoreductase subunit D of Prosthecochloris aestuarii (strain DSM 271 / SK 413).